The sequence spans 913 residues: Anoctamin-5 (913 aa).

The Cytoplasmic portion of the chain corresponds to 1 to 299 (MGDPDLLEVL…DLIKNYYGEK (299 aa)). A helical transmembrane segment spans residues 300–320 (IGIYFVFLGFYTEMLFFAAVV). The Extracellular portion of the chain corresponds to 321-380 (GLACFIYGLLSMEHNTSSTEICDPEIGGQMIMCPLCDQVCDYWRLNSTCLASKFSHLFDN). Asn-335, Asn-366, and Asn-380 each carry an N-linked (GlcNAc...) asparagine glycan. The helical transmembrane segment at 381–401 (ESTVFFAIFMGIWVTLFLEFW) threads the bilayer. The Cytoplasmic portion of the chain corresponds to 402–462 (KQRQARLEYE…YTRIPWYFLS (61 aa)). A helical membrane pass occupies residues 463–483 (GATVTLWMSLVVTSMVAVIVY). Over 484–511 (RLSVFATFASFMESDASLKQVKSFLTPQ) the chain is Extracellular. Residues 512–532 (ITTSLTGSCLNFIVILILNFF) traverse the membrane as a helical segment. Topologically, residues 533-557 (YEKISAWITKMEIPRTYQEYESSLT) are cytoplasmic. The helical transmembrane segment at 558 to 578 (LKMFLFQFVNFYSSCFYVAFF) threads the bilayer. Residues 579–679 (KGKFVGYPGK…FYEYLETVTQ (101 aa)) lie on the Extracellular side of the membrane. The chain crosses the membrane as a helical span at residues 680-700 (FGFVTLFVASFPLAPLLALIN). Residues 701–732 (NIVEIRVDAWKLTTQYRRTVASKAHSIGVWQD) lie on the Cytoplasmic side of the membrane. The helical transmembrane segment at 733–753 (ILYGMAVLSVATNAFIVAFTS) threads the bilayer. The Extracellular segment spans residues 754 to 834 (DIIPRLVYYY…FWHVLAAKMT (81 aa)). Residues Asn-768, Asn-778, and Asn-791 are each glycosylated (N-linked (GlcNAc...) asparagine). A helical transmembrane segment spans residues 835 to 855 (FIIVMEHVVFLVKFLLAWMIP). At 856-913 (DVPKDVVERIKREKLMTIKILHDFELNKLKENLGINSNEFAKHVMIEENKAQLAKSTL) the chain is on the cytoplasmic side.

This sequence belongs to the anoctamin family. Highly expressed in brain, heart, kidney, lung, and skeletal muscle. Weakly expressed in bone marrow, fetal liver, placenta, spleen, thymus, osteoblasts and periodontal ligament cells.

It localises to the endoplasmic reticulum membrane. The protein resides in the cell membrane. Plays a role in plasma membrane repair in a process involving annexins. Does not exhibit calcium-activated chloride channel (CaCC) activity. This Homo sapiens (Human) protein is Anoctamin-5 (ANO5).